Reading from the N-terminus, the 475-residue chain is ATP synthase subunit beta (475 aa).

154–161 (GGAGVGKT) is a binding site for ATP.

It belongs to the ATPase alpha/beta chains family. In terms of assembly, F-type ATPases have 2 components, CF(1) - the catalytic core - and CF(0) - the membrane proton channel. CF(1) has five subunits: alpha(3), beta(3), gamma(1), delta(1), epsilon(1). CF(0) has three main subunits: a(1), b(2) and c(9-12). The alpha and beta chains form an alternating ring which encloses part of the gamma chain. CF(1) is attached to CF(0) by a central stalk formed by the gamma and epsilon chains, while a peripheral stalk is formed by the delta and b chains.

Its subcellular location is the cell inner membrane. It carries out the reaction ATP + H2O + 4 H(+)(in) = ADP + phosphate + 5 H(+)(out). Its function is as follows. Produces ATP from ADP in the presence of a proton gradient across the membrane. The catalytic sites are hosted primarily by the beta subunits. This is ATP synthase subunit beta from Hyphomonas neptunium (strain ATCC 15444).